The primary structure comprises 106 residues: MTDEALSIYDEIEIEDMIFDPNLQIYHYPCPCGDRFEIAIDDLRDGEDIAVCPSCSLMIRVIFEVVCSLPASTRSRIWDADNVPYLQSDLPKDGNQPAPGAVSVQA.

Residues 8-64 (IYDEIEIEDMIFDPNLQIYHYPCPCGDRFEIAIDDLRDGEDIAVCPSCSLMIRVIFE) form the DPH-type MB domain. Residues Cys-30, Cys-32, Cys-52, and Cys-55 each contribute to the Fe cation site.

The protein belongs to the DPH3 family. As to quaternary structure, component of the 2-(3-amino-3-carboxypropyl)histidine synthase complex composed of dph1, dph2, dph3 and a NADH-dependent reductase, predominantly cbr1. The cofactor is Fe(2+).

The protein resides in the cytoplasm. It localises to the nucleus. The catalysed reaction is [3Fe-4S](1+)-[protein] + Fe(2+)-[Dph3] = [3Fe-4S](0)-[protein] + Fe(3+)-[Dph3]. It carries out the reaction 2 [3Fe-4S](0)-[protein] + 2 Fe(2+)-[Dph3] + NADH = 2 [4Fe-4S](1+)-[protein] + 2 [Dph3] + NAD(+) + H(+). The protein operates within protein modification; peptidyl-diphthamide biosynthesis. Required for the first step of diphthamide biosynthesis, a post-translational modification of histidine which occurs in elongation factor 2. Dph1 and dph2 transfer a 3-amino-3-carboxypropyl (ACP) group from S-adenosyl-L-methionine (SAM) to a histidine residue, the reaction is assisted by a reduction system comprising dph3 and a NADH-dependent reductase, predominantly cbr1. Acts as an electron donor to reduce the Fe-S cluster in dph1-dph2 keeping the [4Fe-4S] clusters in the active and reduced state. Restores iron to dph1-dph2 iron-sulfur clusters which have degraded from [4Fe-4S] to [3Fe-4S] by donating an iron atom to reform [4Fe-4S] clusters, in a manner dependent on the presence of elongation factor 2 and SAM. Associates with the elongator complex and is required for tRNA Wobble base modifications mediated by the elongator complex. The elongator complex is required for multiple tRNA modifications, including mcm5U (5-methoxycarbonylmethyl uridine), mcm5s 2U (5-methoxycarbonylmethyl-2-thiouridine), and ncm5U (5-carbamoylmethyl uridine). This Aspergillus fumigatus (strain ATCC MYA-4609 / CBS 101355 / FGSC A1100 / Af293) (Neosartorya fumigata) protein is Diphthamide biosynthesis protein 3 (dph3).